Consider the following 585-residue polypeptide: Aspartate--tRNA ligase (585 aa).

E169 contacts L-aspartate. Residues 193 to 196 (QLFK) form an aspartate region. R215 provides a ligand contact to L-aspartate. ATP contacts are provided by residues 215–217 (RDE) and Q224. H443 lines the L-aspartate pocket. E478 serves as a coordination point for ATP. R485 is an L-aspartate binding site. 530–533 (GLDR) serves as a coordination point for ATP.

The protein belongs to the class-II aminoacyl-tRNA synthetase family. Type 1 subfamily. Homodimer.

The protein resides in the cytoplasm. It carries out the reaction tRNA(Asp) + L-aspartate + ATP = L-aspartyl-tRNA(Asp) + AMP + diphosphate. Catalyzes the attachment of L-aspartate to tRNA(Asp) in a two-step reaction: L-aspartate is first activated by ATP to form Asp-AMP and then transferred to the acceptor end of tRNA(Asp). The chain is Aspartate--tRNA ligase from Pseudothermotoga lettingae (strain ATCC BAA-301 / DSM 14385 / NBRC 107922 / TMO) (Thermotoga lettingae).